The primary structure comprises 245 residues: DNA repair protein RecO (245 aa).

The protein belongs to the RecO family.

In terms of biological role, involved in DNA repair and RecF pathway recombination. The protein is DNA repair protein RecO of Anaplasma phagocytophilum (strain HZ).